Reading from the N-terminus, the 249-residue chain is Flavodoxin/ferredoxin--NADP reductase (249 aa).

The region spanning 2-102 is the FAD-binding FR-type domain; it reads NTWITAKIIK…KKSYGFFTLN (101 aa). FAD-binding positions include 51–54, Y67, 75–77, and T117; these read RAYS and QLT. NADP(+)-binding positions include 144-145, 174-175, R185, and 215-217; these read VR, SR, and NPD. An FAD-binding site is contributed by 248-249; that stretch reads YW.

It belongs to the ferredoxin--NADP reductase type 1 family. Requires FAD as cofactor.

The protein resides in the cytoplasm. It catalyses the reaction 2 reduced [2Fe-2S]-[ferredoxin] + NADP(+) + H(+) = 2 oxidized [2Fe-2S]-[ferredoxin] + NADPH. The enzyme catalyses reduced [flavodoxin] + NADP(+) = oxidized [flavodoxin] + NADPH + 2 H(+). Its function is as follows. Transports electrons between flavodoxin or ferredoxin and NADPH. This is Flavodoxin/ferredoxin--NADP reductase (fpr) from Buchnera aphidicola subsp. Baizongia pistaciae (strain Bp).